Reading from the N-terminus, the 198-residue chain is Protein XA-1 (198 aa).

An N-terminal signal peptide occupies residues 1 to 18 (MFFYVLLLALMAQGWSLP). Positions 17–198 (LPQGKTGEDS…KHGQEQGKKH (182 aa)) are disordered. The segment covering 29-44 (FRPPSPPMGPSLPPPV) has biased composition (pro residues). The segment covering 46 to 59 (HDLHRPSGHPEEFR) has biased composition (basic and acidic residues). Over residues 76–86 (GRPKRDLHHGK) the composition is skewed to basic residues. Basic and acidic residues predominate over residues 95-104 (HTGEVLHHTD). Residues 134-145 (HGRHRRDLHHGK) are compositionally biased toward basic residues. A compositionally biased stretch (basic and acidic residues) spans 181–198 (NSSEEKRPKHGQEQGKKH).

As to expression, expressed in the periphery of the cement gland as well as in the region of the hatching gland.

Its subcellular location is the secreted. This is Protein XA-1 from Xenopus laevis (African clawed frog).